Reading from the N-terminus, the 62-residue chain is MTIAFQLAVFALIATSSILLISVPVVFASPDGWSSNKNVVFSGTSLWIALVFLVGILNSLIS.

Transmembrane regions (helical) follow at residues 8-28 (AVFA…VVFA) and 41-61 (FSGT…NSLI).

It belongs to the PsbZ family. In terms of assembly, PSII is composed of 1 copy each of membrane proteins PsbA, PsbB, PsbC, PsbD, PsbE, PsbF, PsbH, PsbI, PsbJ, PsbK, PsbL, PsbM, PsbT, PsbY, PsbZ, Psb30/Ycf12, at least 3 peripheral proteins of the oxygen-evolving complex and a large number of cofactors. It forms dimeric complexes.

Its subcellular location is the plastid. The protein localises to the chloroplast thylakoid membrane. Its function is as follows. May control the interaction of photosystem II (PSII) cores with the light-harvesting antenna, regulates electron flow through the 2 photosystem reaction centers. PSII is a light-driven water plastoquinone oxidoreductase, using light energy to abstract electrons from H(2)O, generating a proton gradient subsequently used for ATP formation. The protein is Photosystem II reaction center protein Z of Lotus japonicus (Lotus corniculatus var. japonicus).